The following is a 390-amino-acid chain: Protein phosphatase 1B (390 aa).

The span at 1–14 (MGAFLDKPKTEKHN) shows a compositional bias: basic and acidic residues. The interval 1-20 (MGAFLDKPKTEKHNAHGAGN) is disordered. Gly2 is lipidated: N-myristoyl glycine. Lys12 participates in a covalent cross-link: Glycyl lysine isopeptide (Lys-Gly) (interchain with G-Cter in ISG15). In terms of domain architecture, PPM-type phosphatase spans 23-295 (RYGLSSMQGW…DNMSVVLVCF (273 aa)). Mn(2+) contacts are provided by Asp60, Gly61, Asp243, and Asp286. The disordered stretch occupies residues 371–390 (NPHKDNDGGAGDLEDSLVAL). The residue at position 386 (Ser386) is a Phosphoserine.

This sequence belongs to the PP2C family. Monomer. Interacts with PAK6. Interacts with the phosphorylated form of IKBKB/IKKB. It depends on Mg(2+) as a cofactor. Requires Mn(2+) as cofactor. Post-translationally, isgylation negatively regulates its activity. N-myristoylation is essential for the recognition of its substrates for dephosphorylation. Isoform 1: Expressed ubiquitously. Isoform 2: Expressed exclusively in testis and intestine. Isoform 3: Expressed exclusively in brain and intestine. Isoform 4: Expressed exclusively in testis and intestine.

It localises to the cytoplasm. The protein resides in the cytosol. The protein localises to the membrane. It carries out the reaction O-phospho-L-seryl-[protein] + H2O = L-seryl-[protein] + phosphate. It catalyses the reaction O-phospho-L-threonyl-[protein] + H2O = L-threonyl-[protein] + phosphate. Enzyme with a broad specificity. Dephosphorylates PRKAA1 and PRKAA2. Inhibits TBK1-mediated antiviral signaling by dephosphorylating it at 'Ser-172'. Plays an important role in the termination of TNF-alpha-mediated NF-kappa-B activation through dephosphorylating and inactivating IKBKB/IKKB. This Mus musculus (Mouse) protein is Protein phosphatase 1B (Ppm1b).